Here is a 151-residue protein sequence, read N- to C-terminus: MTTETHTLHIEEILELLPHRYPFLLVDRVLDFEEGRFLRAVKNVSVNEPFFQGHFPGKPIFPGVLILEAMAQATGILAFKSVGKLEPGELYYFAGIDEARFKRPVVPGDQMVMEVTFEKTRRGVTRFKGVALVDGKVVCEATMMCARSREA.

Residue histidine 54 is part of the active site.

The protein belongs to the thioester dehydratase family. FabZ subfamily.

It localises to the cytoplasm. It catalyses the reaction a (3R)-hydroxyacyl-[ACP] = a (2E)-enoyl-[ACP] + H2O. In terms of biological role, involved in unsaturated fatty acids biosynthesis. Catalyzes the dehydration of short chain beta-hydroxyacyl-ACPs and long chain saturated and unsaturated beta-hydroxyacyl-ACPs. This chain is 3-hydroxyacyl-[acyl-carrier-protein] dehydratase FabZ, found in Cronobacter sakazakii (strain ATCC BAA-894) (Enterobacter sakazakii).